Reading from the N-terminus, the 409-residue chain is Putative lipoate-protein ligase A (409 aa).

The BPL/LPL catalytic domain occupies 146 to 330 (GPDNCRLVFY…RFQKTFKVDG (185 aa)). ATP contacts are provided by residues arginine 188, 193 to 196 (GTVL), and lysine 249. A (R)-lipoate-binding site is contributed by lysine 249.

The protein belongs to the LplA family. In terms of assembly, monomer.

It carries out the reaction L-lysyl-[lipoyl-carrier protein] + (R)-lipoate + ATP = N(6)-[(R)-lipoyl]-L-lysyl-[lipoyl-carrier protein] + AMP + diphosphate + H(+). The protein operates within protein modification; protein lipoylation via exogenous pathway; protein N(6)-(lipoyl)lysine from lipoate: step 1/2. It functions in the pathway protein modification; protein lipoylation via exogenous pathway; protein N(6)-(lipoyl)lysine from lipoate: step 2/2. Catalyzes both the ATP-dependent activation of exogenously supplied lipoate to lipoyl-AMP and the transfer of the activated lipoyl onto the lipoyl domains of lipoate-dependent enzymes. This Saccharomyces cerevisiae (strain YJM789) (Baker's yeast) protein is Putative lipoate-protein ligase A (AIM22).